The chain runs to 338 residues: Protein SPATA31F3 (338 aa).

Residues 7-29 (VLWDVGYPLYTYGSICIIALIIW) traverse the membrane as a helical segment. Ser-152 is subject to Phosphoserine. Residues 290–306 (DRTKNIEKSPTVTKDHV) show a composition bias toward basic and acidic residues. A disordered region spans residues 290–338 (DRTKNIEKSPTVTKDHVWGATTQKTTEDPEAQPPSTEEEGLIFCDAPSA).

It belongs to the SPATA31 family.

The protein localises to the membrane. The chain is Protein SPATA31F3 from Homo sapiens (Human).